The following is a 257-amino-acid chain: Ribosomal RNA small subunit methyltransferase J (257 aa).

S-adenosyl-L-methionine is bound by residues 109–110, 125–126, and Asp179; these read RD and ER.

It belongs to the methyltransferase superfamily. RsmJ family.

The protein resides in the cytoplasm. The enzyme catalyses guanosine(1516) in 16S rRNA + S-adenosyl-L-methionine = N(2)-methylguanosine(1516) in 16S rRNA + S-adenosyl-L-homocysteine + H(+). Functionally, specifically methylates the guanosine in position 1516 of 16S rRNA. The sequence is that of Ribosomal RNA small subunit methyltransferase J from Actinobacillus succinogenes (strain ATCC 55618 / DSM 22257 / CCUG 43843 / 130Z).